Reading from the N-terminus, the 446-residue chain is Mitochondrial distribution and morphology protein 12 (446 aa).

Positions 1–446 (MSIDINWEAA…VYPSFWTFLV (446 aa)) constitute an SMP-LTD domain. A compositionally biased stretch (acidic residues) spans 75–85 (DNEIGDGEVSD). 3 disordered regions span residues 75–106 (DNEI…SAAD), 126–145 (PHDV…PIRS), and 188–283 (TPLS…RVRE). The segment covering 126–138 (PHDVPIPSKEDPL) has biased composition (basic and acidic residues). Over residues 233–246 (TGNSRPSTADTLDS) the composition is skewed to polar residues. Basic and acidic residues predominate over residues 260–274 (SSDDAHPNVLPRRDN).

The protein belongs to the MDM12 family. As to quaternary structure, component of the ER-mitochondria encounter structure (ERMES) or MDM complex, composed of MMM1, MDM10, MDM12 and MDM34. An MMM1 homodimer associates with one molecule of MDM12 on each side in a pairwise head-to-tail manner, and the SMP-LTD domains of MMM1 and MDM12 generate a continuous hydrophobic tunnel for phospholipid trafficking.

It is found in the mitochondrion outer membrane. The protein resides in the endoplasmic reticulum membrane. Its function is as follows. Component of the ERMES/MDM complex, which serves as a molecular tether to connect the endoplasmic reticulum (ER) and mitochondria. Components of this complex are involved in the control of mitochondrial shape and protein biogenesis, and function in nonvesicular lipid trafficking between the ER and mitochondria. MDM12 is required for the interaction of the ER-resident membrane protein MMM1 and the outer mitochondrial membrane-resident beta-barrel protein MDM10. The MDM12-MMM1 subcomplex functions in the major beta-barrel assembly pathway that is responsible for biogenesis of all mitochondrial outer membrane beta-barrel proteins, and acts in a late step after the SAM complex. The MDM10-MDM12-MMM1 subcomplex further acts in the TOM40-specific pathway after the action of the MDM12-MMM1 complex. Essential for establishing and maintaining the structure of mitochondria and maintenance of mtDNA nucleoids. This is Mitochondrial distribution and morphology protein 12 from Coccidioides immitis (strain RS) (Valley fever fungus).